Here is a 334-residue protein sequence, read N- to C-terminus: Adenosine deaminase (334 aa).

Zn(2+) contacts are provided by histidine 12 and histidine 14. Substrate is bound by residues histidine 14, aspartate 16, and glycine 170. Position 197 (histidine 197) interacts with Zn(2+). Glutamate 200 acts as the Proton donor in catalysis. Residue aspartate 278 coordinates Zn(2+). Aspartate 279 contacts substrate.

The protein belongs to the metallo-dependent hydrolases superfamily. Adenosine and AMP deaminases family. Adenosine deaminase subfamily. Zn(2+) is required as a cofactor.

It carries out the reaction adenosine + H2O + H(+) = inosine + NH4(+). The enzyme catalyses 2'-deoxyadenosine + H2O + H(+) = 2'-deoxyinosine + NH4(+). In terms of biological role, catalyzes the hydrolytic deamination of adenosine and 2-deoxyadenosine. This chain is Adenosine deaminase, found in Vibrio cholerae serotype O1 (strain ATCC 39541 / Classical Ogawa 395 / O395).